The chain runs to 308 residues: Glycine--tRNA ligase alpha subunit (308 aa).

The protein belongs to the class-II aminoacyl-tRNA synthetase family. In terms of assembly, tetramer of two alpha and two beta subunits.

The protein localises to the cytoplasm. The catalysed reaction is tRNA(Gly) + glycine + ATP = glycyl-tRNA(Gly) + AMP + diphosphate. The protein is Glycine--tRNA ligase alpha subunit of Brucella abortus (strain 2308).